The sequence spans 154 residues: Large ribosomal subunit protein uL22 (154 aa).

The protein belongs to the universal ribosomal protein uL22 family. Part of the 50S ribosomal subunit.

In terms of biological role, this protein binds specifically to 23S rRNA. It makes multiple contacts with different domains of the 23S rRNA in the assembled 50S subunit and ribosome. Its function is as follows. The globular domain of the protein is located near the polypeptide exit tunnel on the outside of the subunit, while an extended beta-hairpin is found that lines the wall of the exit tunnel in the center of the 70S ribosome. The chain is Large ribosomal subunit protein uL22 from Methanoregula boonei (strain DSM 21154 / JCM 14090 / 6A8).